The primary structure comprises 150 residues: Large ribosomal subunit protein bL9 (150 aa).

This sequence belongs to the bacterial ribosomal protein bL9 family.

Binds to the 23S rRNA. The sequence is that of Large ribosomal subunit protein bL9 from Variovorax paradoxus (strain S110).